Consider the following 116-residue polypeptide: UPF0499 protein ATEG_06693 (116 aa).

Residues 1–18 (MKLTGLLSLALLTTLALA) form the signal peptide. Disulfide bonds link cysteine 32–cysteine 46, cysteine 36–cysteine 49, and cysteine 42–cysteine 54.

The protein belongs to the UPF0499 family.

It is found in the secreted. The chain is UPF0499 protein ATEG_06693 from Aspergillus terreus (strain NIH 2624 / FGSC A1156).